Consider the following 768-residue polypeptide: U-box domain-containing protein 45 (768 aa).

The U-box domain maps to 278–352; it reads VPPEELRCPI…SSWCEQNGVQ (75 aa). ARM repeat units follow at residues 454-497, 500-540, 542-579, 581-620, and 623-662; these read EEAR…NLAV, NRNK…CLEE, KPVIGSSLAVPFMVNLLWTETEVQCKVDALHSLFHLST, PPNIPCLLSADLVNALQSLTISDEQRWTEKSLAVLLNLVL, and AGKDEMVSAPSLVSNLCTILDTGEPNEQEQAVSLLLILCN.

In terms of assembly, binds to SD129.

The enzyme catalyses S-ubiquitinyl-[E2 ubiquitin-conjugating enzyme]-L-cysteine + [acceptor protein]-L-lysine = [E2 ubiquitin-conjugating enzyme]-L-cysteine + N(6)-ubiquitinyl-[acceptor protein]-L-lysine.. The protein operates within protein modification; protein ubiquitination. Functions as an E3 ubiquitin ligase. The protein is U-box domain-containing protein 45 (PUB45) of Arabidopsis thaliana (Mouse-ear cress).